The following is a 227-amino-acid chain: Peroxiredoxin 1 (227 aa).

The Thioredoxin domain maps to Pro6–Met161. Catalysis depends on Cys48, which acts as the Cysteine sulfenic acid (-SOH) intermediate. Arg124 contributes to the substrate binding site.

The protein belongs to the peroxiredoxin family. Prx6 subfamily. As to quaternary structure, homodecamer. Pentamer of dimers that assemble into a ring structure.

The protein resides in the cytoplasm. It carries out the reaction a hydroperoxide + [thioredoxin]-dithiol = an alcohol + [thioredoxin]-disulfide + H2O. Its function is as follows. Thiol-specific peroxidase that catalyzes the reduction of hydrogen peroxide and organic hydroperoxides to water and alcohols, respectively. Plays a role in cell protection against oxidative stress by detoxifying peroxides. The sequence is that of Peroxiredoxin 1 from Picrophilus torridus (strain ATCC 700027 / DSM 9790 / JCM 10055 / NBRC 100828 / KAW 2/3).